The primary structure comprises 699 residues: Elongation factor G (699 aa).

Residues 8–283 enclose the tr-type G domain; sequence EQIRNIGICA…AIVDFLPSPI (276 aa). GTP-binding positions include 17-24, 81-85, and 135-138; these read AHIDAGKT, DTPGH, and NKMD.

It belongs to the TRAFAC class translation factor GTPase superfamily. Classic translation factor GTPase family. EF-G/EF-2 subfamily.

It is found in the cytoplasm. In terms of biological role, catalyzes the GTP-dependent ribosomal translocation step during translation elongation. During this step, the ribosome changes from the pre-translocational (PRE) to the post-translocational (POST) state as the newly formed A-site-bound peptidyl-tRNA and P-site-bound deacylated tRNA move to the P and E sites, respectively. Catalyzes the coordinated movement of the two tRNA molecules, the mRNA and conformational changes in the ribosome. In Rickettsia prowazekii (strain Madrid E), this protein is Elongation factor G (fusA).